The chain runs to 248 residues: UPF0246 protein RAF_ORF0648 (248 aa).

This sequence belongs to the UPF0246 family.

The chain is UPF0246 protein RAF_ORF0648 from Rickettsia africae (strain ESF-5).